An 851-amino-acid chain; its full sequence is Probable disease resistance protein At1g15890 (851 aa).

One can recognise an NB-ARC domain in the interval 139-441; that stretch reads AEKIPAPKVE…CEGFIDGNED (303 aa). 181–188 lines the ATP pocket; the sequence is GMGGVGKT. 5 LRR repeats span residues 514–535, 536–557, 560–582, 584–605, and 607–629; these read SLRR…SNSP, NLST…FFRF, ALVV…ISKL, SLQY…FKEL, and KLIH…ATSL.

The protein belongs to the disease resistance NB-LRR family.

Functionally, probable disease resistance protein. This Arabidopsis thaliana (Mouse-ear cress) protein is Probable disease resistance protein At1g15890.